A 353-amino-acid chain; its full sequence is Ribosome biogenesis protein BRX1 homolog (353 aa).

The segment covering Met1–Gly10 has biased composition (basic residues). The disordered stretch occupies residues Met1 to Arg46. The span at Asn22 to Ala36 shows a compositional bias: basic and acidic residues. One can recognise a Brix domain in the interval Glu60 to Gly249. Lys160 is covalently cross-linked (Glycyl lysine isopeptide (Lys-Gly) (interchain with G-Cter in SUMO2)). Ser261 carries the post-translational modification Phosphoserine. Lys276 bears the N6-acetyllysine mark. Glycyl lysine isopeptide (Lys-Gly) (interchain with G-Cter in SUMO2) cross-links involve residues Lys314 and Lys322.

Belongs to the BRX1 family.

The protein resides in the nucleus. It localises to the nucleolus. In terms of biological role, required for biogenesis of the 60S ribosomal subunit. The polypeptide is Ribosome biogenesis protein BRX1 homolog (BRIX1) (Pongo abelii (Sumatran orangutan)).